The chain runs to 184 residues: Ribosome-recycling factor (184 aa).

This sequence belongs to the RRF family.

The protein resides in the cytoplasm. Its function is as follows. Responsible for the release of ribosomes from messenger RNA at the termination of protein biosynthesis. May increase the efficiency of translation by recycling ribosomes from one round of translation to another. This chain is Ribosome-recycling factor, found in Aster yellows witches'-broom phytoplasma (strain AYWB).